Here is a 354-residue protein sequence, read N- to C-terminus: 3-dehydroquinate synthase (354 aa).

NAD(+) is bound by residues aspartate 39, tyrosine 45, 68 to 71, 100 to 104, 124 to 125, lysine 136, lysine 145, and 163 to 166; these read EKTK, GATGD, TT, and FLKT. Zn(2+) contacts are provided by glutamate 178, histidine 242, and histidine 256.

The protein belongs to the sugar phosphate cyclases superfamily. Dehydroquinate synthase family. Requires NAD(+) as cofactor. Co(2+) is required as a cofactor. Zn(2+) serves as cofactor.

Its subcellular location is the cytoplasm. The enzyme catalyses 7-phospho-2-dehydro-3-deoxy-D-arabino-heptonate = 3-dehydroquinate + phosphate. The protein operates within metabolic intermediate biosynthesis; chorismate biosynthesis; chorismate from D-erythrose 4-phosphate and phosphoenolpyruvate: step 2/7. In terms of biological role, catalyzes the conversion of 3-deoxy-D-arabino-heptulosonate 7-phosphate (DAHP) to dehydroquinate (DHQ). The polypeptide is 3-dehydroquinate synthase (Staphylococcus aureus (strain MRSA252)).